The sequence spans 692 residues: Elongation factor G (692 aa).

The 276-residue stretch at 8-283 (DKYRNIGIMA…AVVDYMPSPL (276 aa)) folds into the tr-type G domain. Residues 17–24 (AHIDAGKT), 81–85 (DTPGH), and 135–138 (NKMD) each bind GTP.

Belongs to the TRAFAC class translation factor GTPase superfamily. Classic translation factor GTPase family. EF-G/EF-2 subfamily.

It localises to the cytoplasm. In terms of biological role, catalyzes the GTP-dependent ribosomal translocation step during translation elongation. During this step, the ribosome changes from the pre-translocational (PRE) to the post-translocational (POST) state as the newly formed A-site-bound peptidyl-tRNA and P-site-bound deacylated tRNA move to the P and E sites, respectively. Catalyzes the coordinated movement of the two tRNA molecules, the mRNA and conformational changes in the ribosome. In Trichlorobacter lovleyi (strain ATCC BAA-1151 / DSM 17278 / SZ) (Geobacter lovleyi), this protein is Elongation factor G.